The primary structure comprises 329 residues: 4-hydroxythreonine-4-phosphate dehydrogenase (329 aa).

Substrate is bound by residues histidine 136 and threonine 137. The a divalent metal cation site is built by histidine 166, histidine 211, and histidine 266. Substrate contacts are provided by lysine 274, asparagine 283, and arginine 292.

This sequence belongs to the PdxA family. Homodimer. The cofactor is Zn(2+). Mg(2+) serves as cofactor. It depends on Co(2+) as a cofactor.

It localises to the cytoplasm. The enzyme catalyses 4-(phosphooxy)-L-threonine + NAD(+) = 3-amino-2-oxopropyl phosphate + CO2 + NADH. The protein operates within cofactor biosynthesis; pyridoxine 5'-phosphate biosynthesis; pyridoxine 5'-phosphate from D-erythrose 4-phosphate: step 4/5. Its function is as follows. Catalyzes the NAD(P)-dependent oxidation of 4-(phosphooxy)-L-threonine (HTP) into 2-amino-3-oxo-4-(phosphooxy)butyric acid which spontaneously decarboxylates to form 3-amino-2-oxopropyl phosphate (AHAP). In Escherichia coli O7:K1 (strain IAI39 / ExPEC), this protein is 4-hydroxythreonine-4-phosphate dehydrogenase.